A 130-amino-acid polypeptide reads, in one-letter code: Small ribosomal subunit protein uS9 (130 aa).

Residues 99–110 (KKAGFLTRDPRM) show a composition bias toward basic and acidic residues. The tract at residues 99–130 (KKAGFLTRDPRMKERKKYGLKKARRAPQFSKR) is disordered. The segment covering 111 to 130 (KERKKYGLKKARRAPQFSKR) has biased composition (basic residues).

The protein belongs to the universal ribosomal protein uS9 family.

This Clostridium botulinum (strain Eklund 17B / Type B) protein is Small ribosomal subunit protein uS9.